A 229-amino-acid polypeptide reads, in one-letter code: Histidine biosynthesis bifunctional protein HisIE (229 aa).

Residues methionine 1–valine 127 form a phosphoribosyl-AMP cyclohydrolase region. A phosphoribosyl-ATP pyrophosphohydrolase region spans residues valine 128–serine 229.

It in the N-terminal section; belongs to the PRA-CH family. The protein in the C-terminal section; belongs to the PRA-PH family.

It is found in the cytoplasm. The enzyme catalyses 1-(5-phospho-beta-D-ribosyl)-ATP + H2O = 1-(5-phospho-beta-D-ribosyl)-5'-AMP + diphosphate + H(+). It catalyses the reaction 1-(5-phospho-beta-D-ribosyl)-5'-AMP + H2O = 1-(5-phospho-beta-D-ribosyl)-5-[(5-phospho-beta-D-ribosylamino)methylideneamino]imidazole-4-carboxamide. Its pathway is amino-acid biosynthesis; L-histidine biosynthesis; L-histidine from 5-phospho-alpha-D-ribose 1-diphosphate: step 2/9. It participates in amino-acid biosynthesis; L-histidine biosynthesis; L-histidine from 5-phospho-alpha-D-ribose 1-diphosphate: step 3/9. This chain is Histidine biosynthesis bifunctional protein HisIE, found in Wolinella succinogenes (strain ATCC 29543 / DSM 1740 / CCUG 13145 / JCM 31913 / LMG 7466 / NCTC 11488 / FDC 602W) (Vibrio succinogenes).